The chain runs to 461 residues: Nuclear distribution protein PAC1 (461 aa).

Residues 64–93 adopt a coiled-coil conformation; sequence NSIIRLHRKILDLEQKCQQLTEELEAVPTE. WD repeat units lie at residues 118–157, 161–203, 209–252, 254–292, 318–362, 382–421, and 423–461; these read DVGA…MPLH, AHMK…AFQL, SHEH…KSFQ, HNQW…SMAV, DDQV…FIPH, GHTS…KVWP, and ASHG…VFMR.

It belongs to the WD repeat LIS1/nudF family. Self-associates. Interacts with NDL1 and dynein.

Its subcellular location is the cytoplasm. The protein resides in the cytoskeleton. It is found in the spindle pole. Positively regulates the activity of the minus-end directed microtubule motor protein dynein. Plays a central role in positioning the mitotic spindle at the bud neck during cell division. Targets cytoplasmic dynein to microtubule plus ends, thereby promoting dynein-mediated microtubule sliding along the bud cortex and consequently the movement of the mitotic spindle to the bud neck. The sequence is that of Nuclear distribution protein PAC1 from Eremothecium gossypii (strain ATCC 10895 / CBS 109.51 / FGSC 9923 / NRRL Y-1056) (Yeast).